We begin with the raw amino-acid sequence, 449 residues long: Chitobiosyldiphosphodolichol beta-mannosyltransferase (449 aa).

Residues 1–7 (MFLEIPR) lie on the Lumenal side of the membrane. A helical transmembrane segment spans residues 8–28 (WLLALIILYLSIPLVVYYVIP). Residues 21-32 (LVVYYVIPYLFY) carry the Dolichol recognition motif. Topologically, residues 29-104 (YLFYGNKSTK…SNLKRKGGGT (76 aa)) are cytoplasmic. An intramembrane region (helical) is located at residues 105 to 125 (SVIFMVKKVLFQVLSIFKLLW). Topologically, residues 126–449 (ELRGSDYILV…RTMRDLKLIH (324 aa)) are cytoplasmic. The required for oligomerization stretch occupies residues 435 to 449 (QSNWERTMRDLKLIH).

This sequence belongs to the glycosyltransferase group 1 family. Glycosyltransferase 33 subfamily. In terms of assembly, homodimer. ALG1 forms mannosyltransferases (MT) heteromeric complexes with either ALG2 or ALG11.

Its subcellular location is the endoplasmic reticulum membrane. The catalysed reaction is an N,N'-diacetylchitobiosyl-diphospho-di-trans,poly-cis-dolichol + GDP-alpha-D-mannose = a beta-D-Man-(1-&gt;4)-beta-D-GlcNAc-(1-&gt;4)-alpha-D-GlcNAc-diphospho-di-trans,poly-cis-dolichol + GDP + H(+). Its pathway is protein modification; protein glycosylation. Its function is as follows. Participates in the formation of the lipid-linked precursor oligosaccharide for N-glycosylation. Involved in assembling the dolichol-pyrophosphate-GlcNAc(2)-Man(5) intermediate on the cytoplasmic surface of the ER. This is Chitobiosyldiphosphodolichol beta-mannosyltransferase (ALG1) from Saccharomyces cerevisiae (strain ATCC 204508 / S288c) (Baker's yeast).